A 518-amino-acid polypeptide reads, in one-letter code: Bifunctional purine biosynthesis protein PurH (518 aa).

The MGS-like domain maps to 1–146 (MSPIALLSVS…KNHQDVLVVT (146 aa)).

The protein belongs to the PurH family.

It carries out the reaction (6R)-10-formyltetrahydrofolate + 5-amino-1-(5-phospho-beta-D-ribosyl)imidazole-4-carboxamide = 5-formamido-1-(5-phospho-D-ribosyl)imidazole-4-carboxamide + (6S)-5,6,7,8-tetrahydrofolate. It catalyses the reaction IMP + H2O = 5-formamido-1-(5-phospho-D-ribosyl)imidazole-4-carboxamide. The protein operates within purine metabolism; IMP biosynthesis via de novo pathway; 5-formamido-1-(5-phospho-D-ribosyl)imidazole-4-carboxamide from 5-amino-1-(5-phospho-D-ribosyl)imidazole-4-carboxamide (10-formyl THF route): step 1/1. It participates in purine metabolism; IMP biosynthesis via de novo pathway; IMP from 5-formamido-1-(5-phospho-D-ribosyl)imidazole-4-carboxamide: step 1/1. The protein is Bifunctional purine biosynthesis protein PurH of Prochlorococcus marinus (strain NATL2A).